A 127-amino-acid chain; its full sequence is Fluoride-specific ion channel FluC (127 aa).

4 helical membrane-spanning segments follow: residues 4–24 (SILA…FLGL), 36–56 (GTLL…AYFA), 68–88 (LIIT…AEVV), and 99–119 (AAGA…LGLF). Residues Gly-75 and Thr-78 each coordinate Na(+).

It belongs to the fluoride channel Fluc/FEX (TC 1.A.43) family.

Its subcellular location is the cell inner membrane. The catalysed reaction is fluoride(in) = fluoride(out). Na(+) is not transported, but it plays an essential structural role and its presence is essential for fluoride channel function. Functionally, fluoride-specific ion channel. Important for reducing fluoride concentration in the cell, thus reducing its toxicity. The sequence is that of Fluoride-specific ion channel FluC from Pseudomonas paraeruginosa (strain DSM 24068 / PA7) (Pseudomonas aeruginosa (strain PA7)).